Consider the following 528-residue polypeptide: Glycerol kinase 5 (528 aa).

Residues Ser-28 and Ser-29 each coordinate ATP. Arg-98, Asp-275, and Gln-276 together coordinate glycerol. The ATP site is built by Thr-297, Gly-340, and Gly-440.

It belongs to the FGGY kinase family.

Its subcellular location is the cytoplasm. It catalyses the reaction glycerol + ATP = sn-glycerol 3-phosphate + ADP + H(+). The protein operates within polyol metabolism; glycerol degradation via glycerol kinase pathway; sn-glycerol 3-phosphate from glycerol: step 1/1. In terms of biological role, skin-specific kinase that plays a key role in glycerol metabolism, catalyzing its phosphorylation to produce sn-glycerol 3-phosphate. Involved in skin-specific regulation of sterol regulatory element-binding protein (SREBP) processing and lipid biosynthesis. The protein is Glycerol kinase 5 (GK5) of Bos taurus (Bovine).